The primary structure comprises 261 residues: 4-phosphopantoate--beta-alanine ligase (261 aa).

Residues arginine 17, arginine 39, 181 to 183 (DLN), 187 to 188 (RS), and 199 to 200 (NI) each bind ATP.

This sequence belongs to the archaeal phosphopantothenate synthetase family. As to quaternary structure, homodimer.

The enzyme catalyses (R)-4-phosphopantoate + beta-alanine + ATP = (R)-4'-phosphopantothenate + AMP + diphosphate + H(+). The protein operates within cofactor biosynthesis; coenzyme A biosynthesis. Its activity is regulated as follows. Activity is not affected by 4'-phosphopantothenate or CoA/acetyl-CoA. Catalyzes the condensation of (R)-4-phosphopantoate and beta-alanine to 4'-phosphopantothenate in the CoA biosynthesis pathway. Cannot use (R)-pantoate as substrate and thus does not display pantothenate synthetase (PS) activity. Displays strict specificity for its natural substrates, 4-phosphopantoate, ATP and beta-alanine. The polypeptide is 4-phosphopantoate--beta-alanine ligase (Thermococcus kodakarensis (strain ATCC BAA-918 / JCM 12380 / KOD1) (Pyrococcus kodakaraensis (strain KOD1))).